The sequence spans 204 residues: MFHRRKRPYNTRNYGHDDKKFKSQYIDIMPDFSPSGLLELESNNKEGIALKHVEPQDAISPDNYMDMLGLEARDRTMYELVIYRKNDKDKGPWKRYDLNGRSCYLVGRELGHSLDTDLDDRTEIVVADIGIPEETSSKQHCVIQFRNVRGILKCYVMDLDSSNGTCLNNVVIPGARYIELRSGDVLTLSEFEEDNDYELIFMNV.

An FHA domain is found at 104 to 172 (YLVGRELGHS…NGTCLNNVVI (69 aa)).

As to quaternary structure, belongs to the pre-mRNA retention and splicing (RES) complex composed of at least BUD13, IST3 and PML1.

The protein resides in the cytoplasm. Its subcellular location is the nucleus. Functionally, required for efficient splicing and pre-mRNA nuclear retention. The chain is Pre-mRNA leakage protein 1 (PML1) from Saccharomyces cerevisiae (strain ATCC 204508 / S288c) (Baker's yeast).